Reading from the N-terminus, the 431-residue chain is Enolase (431 aa).

Glutamine 167 contributes to the (2R)-2-phosphoglycerate binding site. Glutamate 209 (proton donor) is an active-site residue. Positions 246, 290, and 317 each coordinate Mg(2+). Positions 342, 371, 372, and 393 each coordinate (2R)-2-phosphoglycerate. Residue lysine 342 is the Proton acceptor of the active site.

This sequence belongs to the enolase family. In terms of assembly, component of the RNA degradosome, a multiprotein complex involved in RNA processing and mRNA degradation. It depends on Mg(2+) as a cofactor.

It localises to the cytoplasm. It is found in the secreted. The protein localises to the cell surface. It carries out the reaction (2R)-2-phosphoglycerate = phosphoenolpyruvate + H2O. The protein operates within carbohydrate degradation; glycolysis; pyruvate from D-glyceraldehyde 3-phosphate: step 4/5. Its function is as follows. Catalyzes the reversible conversion of 2-phosphoglycerate (2-PG) into phosphoenolpyruvate (PEP). It is essential for the degradation of carbohydrates via glycolysis. The sequence is that of Enolase from Yersinia pestis bv. Antiqua (strain Antiqua).